A 512-amino-acid chain; its full sequence is Sporulation-regulated protein 3 (512 aa).

The tract at residues 31 to 68 is disordered; the sequence is RQSSQGQYAVDSHPPKSPELKHRRQRSSSFVNGKCRNR. The region spanning 106–365 is the Septin-type G domain; sequence NGIDFTLMVA…EKCRSEMLRT (260 aa). Residues 116–123 are G1 motif; that stretch reads GQSGLGKT. GTP contacts are provided by residues 116–123, G168, 247–255, and R315; these read GQSGLGKT and KSDLLTKEE. Residues 165-168 form a G3 motif region; it reads DTPG. The G4 motif stretch occupies residues 246-249; that stretch reads AKSD. Coiled-coil stretches lie at residues 376–406 and 451–496; these read TKSVDITEEQRKFLEEEMNFDEIEENKLKNY and RDWK…KSSN.

Belongs to the TRAFAC class TrmE-Era-EngA-EngB-Septin-like GTPase superfamily. Septin GTPase family. As to quaternary structure, interacts with other septin proteins such as SPR28 to form a ring at the bud neck.

It is found in the prospore membrane. Its subcellular location is the bud neck. Functionally, septins are GTPases involved in cytokinesis that assemble into filaments and form a ring at the cleavage site. May act by recruiting MYO1 and HOF1, a protein involved in septation, to the site of cleavage. Septins are also involved in cell morphogenesis, bud site selection, chitin deposition, cell cycle regulation, cell compartmentalization and spore wall formation. The protein is Sporulation-regulated protein 3 (SPR3) of Saccharomyces cerevisiae (strain ATCC 204508 / S288c) (Baker's yeast).